The sequence spans 235 residues: Small ribosomal subunit protein eS4 (235 aa).

Residues V38 to D99 enclose the S4 RNA-binding domain.

It belongs to the eukaryotic ribosomal protein eS4 family.

The polypeptide is Small ribosomal subunit protein eS4 (rps4e) (Thermoplasma acidophilum (strain ATCC 25905 / DSM 1728 / JCM 9062 / NBRC 15155 / AMRC-C165)).